A 667-amino-acid polypeptide reads, in one-letter code: Single-minded homolog 2 (667 aa).

Positions 1–53 constitute a bHLH domain; it reads MKEKSKNAAKTRREKENGEFYELAKLLPLPSAITSQLDKASIIRLTTSYLKMR. PAS domains follow at residues 77 to 149 and 218 to 288; these read AKEL…LHHH and PPSA…LVKG. Positions 292 to 335 constitute a PAC domain; that stretch reads TKYYRLLSKRGGWVWVQSYATVVHNSRSSRPHCIVSVNYVLTEI. In terms of domain architecture, Single-minded C-terminal spans 336-667; it reads EYKELQLSLE…GASVIITNGR (332 aa). 3 disordered regions span residues 356–389, 409–428, and 500–520; these read WRTALSTSQETRKLVKPKNTKMKTKLRTNPYPPQ, ASPPASAAAPPELQPHSESS, and SSSSPAKNPPEPPANTARHSL. Positions 367–386 match the Nuclear localization signal motif; sequence RKLVKPKNTKMKTKLRTNPY. Residues 369–381 show a composition bias toward basic residues; that stretch reads LVKPKNTKMKTKL. Over residues 409–419 the composition is skewed to low complexity; the sequence is ASPPASAAAPP.

In terms of assembly, efficient DNA binding requires dimerization with another bHLH protein. Heterodimer of SIM2 and ARNT.

The protein resides in the nucleus. Functionally, transcription factor that may be a master gene of CNS development in cooperation with Arnt. It may have pleiotropic effects in the tissues expressed during development. The protein is Single-minded homolog 2 (SIM2) of Homo sapiens (Human).